The primary structure comprises 212 residues: Pyridoxine/pyridoxamine 5'-phosphate oxidase (212 aa).

FMN is bound by residues 59 to 64, 74 to 75, Lys81, and Gln103; these read RMVLMK and YS. Lys64 contacts substrate. Tyr121 and Arg125 together coordinate substrate. Residues 138-139 and Trp183 contribute to the FMN site; that span reads QS. A substrate-binding site is contributed by 189–191; that stretch reads RLH. Arg193 serves as a coordination point for FMN.

This sequence belongs to the pyridoxamine 5'-phosphate oxidase family. Homodimer. Requires FMN as cofactor.

It carries out the reaction pyridoxamine 5'-phosphate + O2 + H2O = pyridoxal 5'-phosphate + H2O2 + NH4(+). The catalysed reaction is pyridoxine 5'-phosphate + O2 = pyridoxal 5'-phosphate + H2O2. It functions in the pathway cofactor metabolism; pyridoxal 5'-phosphate salvage; pyridoxal 5'-phosphate from pyridoxamine 5'-phosphate: step 1/1. It participates in cofactor metabolism; pyridoxal 5'-phosphate salvage; pyridoxal 5'-phosphate from pyridoxine 5'-phosphate: step 1/1. In terms of biological role, catalyzes the oxidation of either pyridoxine 5'-phosphate (PNP) or pyridoxamine 5'-phosphate (PMP) into pyridoxal 5'-phosphate (PLP). This Rhodopseudomonas palustris (strain TIE-1) protein is Pyridoxine/pyridoxamine 5'-phosphate oxidase.